The chain runs to 98 residues: NADH-ubiquinone oxidoreductase chain 4L (98 aa).

The next 3 membrane-spanning stretches (helical) occupy residues 1–21 (MPPI…GMLV), 29–49 (SLLC…TMAL), and 61–81 (IVLL…LVMV).

Belongs to the complex I subunit 4L family. In terms of assembly, core subunit of respiratory chain NADH dehydrogenase (Complex I) which is composed of 45 different subunits.

It is found in the mitochondrion inner membrane. It carries out the reaction a ubiquinone + NADH + 5 H(+)(in) = a ubiquinol + NAD(+) + 4 H(+)(out). Functionally, core subunit of the mitochondrial membrane respiratory chain NADH dehydrogenase (Complex I) which catalyzes electron transfer from NADH through the respiratory chain, using ubiquinone as an electron acceptor. Part of the enzyme membrane arm which is embedded in the lipid bilayer and involved in proton translocation. The polypeptide is NADH-ubiquinone oxidoreductase chain 4L (MT-ND4L) (Orycteropus afer (Aardvark)).